The primary structure comprises 160 residues: Cell cycle regulator of non-homologous end joining (160 aa).

N-acetylmethionine is present on Met1. The KBM motif lies at 1–21; it reads METLKSDNKKRVLPSWMTAPG. A disordered region spans residues 78–152; it reads KPWEQPSLVA…EGKEEEDELK (75 aa). Residues 99–109 show a composition bias toward low complexity; sequence ESPHTSSPGSS. Residues 150–160 carry the XLM motif; sequence ELKYVREIFFS.

As to quaternary structure, interacts (via KBM motif) with XRCC5/Ku80 and XRCC6/Ku70 heterodimer. Interacts (via XLF motif) with TRIM28/KAP1, ATM, MRE11, NBN and RAD50. Interacts with splicing factor SF3B1. Interacts with ERCC6L2; this interaction is DNA independent.

The protein resides in the cytoplasm. It is found in the nucleus. It localises to the chromosome. Its function is as follows. Cell-cycle-specific regulator of classical non-homologous end joining (NHEJ) of DNA double-strand break (DSB) repair, which can act both as an activator or inhibitor of NHEJ, depending on the cell cycle phase. Acts as a regulator of DNA repair pathway choice by specifically inhibiting classical NHEJ during the S and G2 phases, thereby promoting error-free repair by homologous recombination during cell cycle phases when sister chromatids are present. Preferentially protects single-stranded overhangs at break sites by inhibiting classical NHEJ, thereby creating a local environment that favors homologous recombination. Acts via interaction with XRCC5/Ku80 and XRCC6/Ku70. In contrast, acts as an activator of NHEJ during G1 phase of the cell cycle: promotes classical NHEJ in G1 phase cells via multivalent interactions that increase the affinity of DNA damage response proteins for DSB-associated chromatin. Also involved in immunoglobulin V(D)J recombination. May also act as an indirect regulator of proteasome. The chain is Cell cycle regulator of non-homologous end joining from Rattus norvegicus (Rat).